Reading from the N-terminus, the 73-residue chain is Exodeoxyribonuclease 7 small subunit (73 aa).

The protein belongs to the XseB family. Heterooligomer composed of large and small subunits.

The protein resides in the cytoplasm. The catalysed reaction is Exonucleolytic cleavage in either 5'- to 3'- or 3'- to 5'-direction to yield nucleoside 5'-phosphates.. Functionally, bidirectionally degrades single-stranded DNA into large acid-insoluble oligonucleotides, which are then degraded further into small acid-soluble oligonucleotides. The sequence is that of Exodeoxyribonuclease 7 small subunit from Clostridium novyi (strain NT).